Here is an 86-residue protein sequence, read N- to C-terminus: MAHKKGTGSTRNGRDSNSKRLGVKAYGGEKVTAGSILIRQRGTSFLPGNNVGIGKDDTLFALKEGTVSFESIKRNLKNRKRVNIVI.

The interval 1-24 (MAHKKGTGSTRNGRDSNSKRLGVK) is disordered.

This sequence belongs to the bacterial ribosomal protein bL27 family.

The chain is Large ribosomal subunit protein bL27 from Prochlorococcus marinus (strain AS9601).